We begin with the raw amino-acid sequence, 124 residues long: Fluoride-specific ion channel FluC (124 aa).

4 helical membrane passes run 3 to 23 (VLLIFLGCGAGGVARYGVSNL), 34 to 54 (IGTLIVNITGSLLMGILFIFI), 68 to 88 (LLLIGFLGGYTTFSSFSIETF), and 100 to 120 (ALNVLLSVALCIAGAWLGVLI). Glycine 75 and threonine 78 together coordinate Na(+).

This sequence belongs to the fluoride channel Fluc/FEX (TC 1.A.43) family.

The protein localises to the cell inner membrane. It carries out the reaction fluoride(in) = fluoride(out). With respect to regulation, na(+) is not transported, but it plays an essential structural role and its presence is essential for fluoride channel function. In terms of biological role, fluoride-specific ion channel. Important for reducing fluoride concentration in the cell, thus reducing its toxicity. The sequence is that of Fluoride-specific ion channel FluC from Coxiella burnetii (strain CbuK_Q154) (Coxiella burnetii (strain Q154)).